The sequence spans 313 residues: Protein FixB (313 aa).

An FAD-binding site is contributed by 255–283 (LYLAVGISGQIQHMVGANASQTIFAINKD).

Belongs to the ETF alpha-subunit/FixB family. In terms of assembly, heterodimer of FixA and FixB.

The protein operates within amine and polyamine metabolism; carnitine metabolism. Its function is as follows. Required for anaerobic carnitine reduction. May bring reductant to CaiA. This Shigella dysenteriae serotype 1 (strain Sd197) protein is Protein FixB.